A 230-amino-acid polypeptide reads, in one-letter code: MTDDDRIKLEPSWKAALRAEFDQPYMHQLREFLRQEYAAGKEIYPPGPLIFNALNSTPLEQVKVVILGQDPYHGPGQAHGLCFSVQPGVPAPPSLVNIYKELQRDLNLPIPNHGYLQSWAEQGVLLLNTTMTVQRANAASHAKKGWEFFTDRIIQVVSEQCPNVVFLLWGAHAQSKQKLIDGTRHLVLKSVHPSPLSAYRGFFGCGHFSRANGFLQQHGMAPIDWSLPPL.

D70 acts as the Proton acceptor in catalysis.

This sequence belongs to the uracil-DNA glycosylase (UDG) superfamily. UNG family.

It localises to the cytoplasm. The enzyme catalyses Hydrolyzes single-stranded DNA or mismatched double-stranded DNA and polynucleotides, releasing free uracil.. Functionally, excises uracil residues from the DNA which can arise as a result of misincorporation of dUMP residues by DNA polymerase or due to deamination of cytosine. This Pseudomonas entomophila (strain L48) protein is Uracil-DNA glycosylase.